A 421-amino-acid chain; its full sequence is Histidine--tRNA ligase (421 aa).

This sequence belongs to the class-II aminoacyl-tRNA synthetase family. In terms of assembly, homodimer.

It is found in the cytoplasm. The catalysed reaction is tRNA(His) + L-histidine + ATP = L-histidyl-tRNA(His) + AMP + diphosphate + H(+). The protein is Histidine--tRNA ligase of Coxiella burnetii (strain CbuG_Q212) (Coxiella burnetii (strain Q212)).